The chain runs to 890 residues: Putative RNA-binding protein 15B (890 aa).

Positions 1-133 are disordered; it reads MKRQSERDSS…AEPACPGSSA (133 aa). Residues 10–20 are compositionally biased toward low complexity; it reads SPSGRGSSSSA. 2 stretches are compositionally biased toward basic and acidic residues: residues 22–34 and 66–78; these read RPRE…EAGG and GHRD…DANH. The span at 86 to 99 shows a compositional bias: gly residues; that stretch reads SGSGAGGGGRGGKA. A phosphoserine mark is found at S109 and S113. Residues 113 to 124 are compositionally biased toward pro residues; the sequence is SPLPPPPPPPGA. The RRM 1 domain maps to 139–219; it reads KTLLISSLSP…RPLKVEPVYL (81 aa). Residue K213 forms a Glycyl lysine isopeptide (Lys-Gly) (interchain with G-Cter in SUMO2) linkage. Residues 219–253 are disordered; sequence LRGGGGSSRRSSSSSAAASTPPPGPPAPADPLGYL. The span at 226 to 237 shows a compositional bias: low complexity; the sequence is SRRSSSSSAAAS. The span at 238 to 247 shows a compositional bias: pro residues; the sequence is TPPPGPPAPA. Residues S265 and S267 each carry the phosphoserine modification. 2 RRM domains span residues 337 to 414 and 418 to 492; these read RNLF…YGKA and TRLW…FAKA. The residue at position 532 (T532) is a Phosphothreonine. A disordered region spans residues 547–705; that stretch reads EGDWTSPSKS…KPLEEPKHET (159 aa). S552, S556, and S562 each carry phosphoserine. 2 stretches are compositionally biased toward basic and acidic residues: residues 573–616 and 626–646; these read RSGE…ERSR and RGSD…EGTK. The Nuclear localization signal motif lies at 593-597; that stretch reads RRKRR. Residues 647 to 657 are compositionally biased toward low complexity; it reads ESSSNSLSNSR. Over residues 671-703 the composition is skewed to basic and acidic residues; sequence EAADSSHGKKARDSERNHRTTEAEPKPLEEPKH. Residue K702 forms a Glycyl lysine isopeptide (Lys-Gly) (interchain with G-Cter in SUMO2) linkage. The SPOC domain occupies 711 to 889; that stretch reads LSEYAQTLQL…HMVIVIVRDT (179 aa). The interaction with Epstein-Barr virus BMLF1 stretch occupies residues 722–890; that stretch reads WNGLLVLKNS…MVIVIVRDTA (169 aa).

This sequence belongs to the RRM Spen family. As to quaternary structure, component of the WMM complex, a N6-methyltransferase complex composed of a catalytic subcomplex, named MAC, and of an associated subcomplex, named MACOM. The MAC subcomplex is composed of METTL3 and METTL14. The MACOM subcomplex is composed of WTAP, ZC3H13, CBLL1/HAKAI, VIRMA, and, in some cases of RBM15 (RBM15 or RBM15B). May interact with NCOR2. Interacts with NXF1, the interaction is required to promote mRNA export. (Microbial infection) Interacts (via the SPOC domain) with Epstein-Barr virus BMLF1 (via the N-terminus); the interaction is direct. In terms of tissue distribution, ubiquitously expressed.

The protein resides in the nucleus. It is found in the nucleoplasm. Its subcellular location is the nucleus speckle. The protein localises to the nucleus envelope. RNA-binding protein that acts as a key regulator of N6-methyladenosine (m6A) methylation of RNAs, thereby regulating different processes, such as alternative splicing of mRNAs and X chromosome inactivation mediated by Xist RNA. Associated component of the WMM complex, a complex that mediates N6-methyladenosine (m6A) methylation of RNAs, a modification that plays a role in the efficiency of mRNA splicing and RNA processing. Plays a key role in m6A methylation, possibly by binding target RNAs and recruiting the WMM complex. Involved in random X inactivation mediated by Xist RNA: acts by binding Xist RNA and recruiting the WMM complex, which mediates m6A methylation, leading to target YTHDC1 reader on Xist RNA and promoting transcription repression activity of Xist. Functions in the regulation of alternative or illicit splicing, possibly by regulating m6A methylation. Inhibits pre-mRNA splicing. Also functions as a mRNA export factor by acting as a cofactor for the nuclear export receptor NXF1. The polypeptide is Putative RNA-binding protein 15B (Homo sapiens (Human)).